We begin with the raw amino-acid sequence, 146 residues long: UPF0178 protein R01393 (146 aa).

The protein belongs to the UPF0178 family.

The sequence is that of UPF0178 protein R01393 from Rhizobium meliloti (strain 1021) (Ensifer meliloti).